A 427-amino-acid chain; its full sequence is Trigger factor (427 aa).

Positions 163-248 (GDVVNLDFDG…INEVKSKEVP (86 aa)) constitute a PPIase FKBP-type domain.

The protein belongs to the FKBP-type PPIase family. Tig subfamily.

It localises to the cytoplasm. The enzyme catalyses [protein]-peptidylproline (omega=180) = [protein]-peptidylproline (omega=0). Functionally, involved in protein export. Acts as a chaperone by maintaining the newly synthesized protein in an open conformation. Functions as a peptidyl-prolyl cis-trans isomerase. The protein is Trigger factor of Macrococcus caseolyticus (strain JCSC5402) (Macrococcoides caseolyticum).